A 64-amino-acid polypeptide reads, in one-letter code: Conotoxin Pn-B01122 (64 aa).

A signal peptide spans Met1–Ala22. The propeptide occupies Arg23–Asn48.

It belongs to the conotoxin T superfamily. Contains 2 disulfide bonds that can be either 'C1-C3, C2-C4' or 'C1-C4, C2-C3', since these disulfide connectivities have been observed for conotoxins with cysteine framework V (for examples, see AC P0DQQ7 and AC P81755). Expressed by the venom duct.

It localises to the secreted. This Conus pennaceus (Feathered cone) protein is Conotoxin Pn-B01122.